Reading from the N-terminus, the 65-residue chain is Putative beta-neurotoxin RjAa8 (65 aa).

An LCN-type CS-alpha/beta domain is found at 1 to 64 (KEGYPMGRDG…VWDSSTNKCG (64 aa)). 4 disulfide bridges follow: C11–C63, C15–C37, C22–C44, and C26–C46.

It belongs to the long (4 C-C) scorpion toxin superfamily. Sodium channel inhibitor family. Beta subfamily. Expressed by the venom gland.

Its subcellular location is the secreted. Its function is as follows. Beta toxins bind voltage-independently at site-4 of sodium channels (Nav) and shift the voltage of activation toward more negative potentials thereby affecting sodium channel activation and promoting spontaneous and repetitive firing. This chain is Putative beta-neurotoxin RjAa8, found in Rhopalurus junceus (Caribbean blue scorpion).